A 794-amino-acid chain; its full sequence is Protein SPA1-RELATED 4 (794 aa).

A Protein kinase domain is found at 1–268 (MKGSSESSSR…MSELLQSEFI (268 aa)). A disordered region spans residues 126 to 165 (SCSDSGSDEDATTKSREIGSSRQEEILSERRSKQQEEVKK). Positions 136–165 (ATTKSREIGSSRQEEILSERRSKQQEEVKK) are enriched in basic and acidic residues. A coiled-coil region spans residues 272–326 (RENLEEREAAMELRDRIEEQELLLEFLFLIQQRKQEAADKLQDTISLLSSDIDQV). Disordered stretches follow at residues 352-373 (QGAETTAAEEENDDNSIDEESK) and 428-447 (GRSSEKSSMSQPSKDPINDS). Residues 358–369 (AAEEENDDNSID) show a composition bias toward acidic residues. 7 WD repeats span residues 482-521 (NSSNLVCAIGFDRDGEFFATAGVNKKIKIFECESIIKDGR), 531-571 (ASRS…LVTE), 574-614 (EHEK…SIGT), 616-656 (KTKA…LPLC), 660-698 (GHHKTVSYVRFVDSSTLVSSSTDNTLKLWDLSMSISGIN), 707-746 (GHTNVKNFVGLSVSDGYIATGSETNEVFVYHKAFPMPVLS), and 762-794 (DASQFISSVCWRGQSSTLVAANSTGNIKILEMV). A DWD box motif is present at residues 635–649 (AFGSADHKVYYYDLR).

As to quaternary structure, interacts with COP1 and CO. Binds to CRY1 in response to blue light, this interaction prevents SPA1/COP1 complex formation and thus avoid COP1-dependent degradation of the transcription factor HY5 by the proteasome and promotes hypocotyl elongation.

The protein resides in the nucleus. Repressor of photomorphogenesis in the light. Probably part of the COP1/SPA E3 ubiquitin-protein ligase complex. The chain is Protein SPA1-RELATED 4 (SPA4) from Arabidopsis thaliana (Mouse-ear cress).